Consider the following 750-residue polypeptide: Cation-transporting P-type ATPase B (750 aa).

In terms of domain architecture, HMA spans 17–80 (RRIQLDVAGM…VIEQAGYRAT (64 aa)). The a metal cation site is built by Cys-28 and Cys-31. The next 6 membrane-spanning stretches (helical) occupy residues 104–124 (LIVA…FAIV), 129–149 (FPGW…WAAW), 167–187 (ETLI…TIFV), 200–220 (AILH…VFVL), 360–380 (IAAV…ASWL), and 389–409 (AFSV…GLAT). Residue Asp-445 is the 4-aspartylphosphate intermediate of the active site. 6 helical membrane-spanning segments follow: residues 471-491 (VLAL…TAIV), 500-520 (VADF…EHHV), 547-567 (SRGE…AVAI), 663-683 (VAIG…VPVA), 693-713 (TIRI…PIAS), and 715-735 (GLLN…FVVS).

The protein belongs to the cation transport ATPase (P-type) (TC 3.A.3) family. Type IB subfamily.

The protein localises to the cell membrane. The catalysed reaction is ATP + H2O = ADP + phosphate + H(+). The protein is Cation-transporting P-type ATPase B (ctpB) of Mycobacterium leprae (strain TN).